The following is a 262-amino-acid chain: Ribosomal RNA small subunit methyltransferase A (262 aa).

The S-adenosyl-L-methionine site is built by Ile18, Gly43, Glu65, Asp91, and Asn110.

It belongs to the class I-like SAM-binding methyltransferase superfamily. rRNA adenine N(6)-methyltransferase family. RsmA subfamily.

Its subcellular location is the cytoplasm. It carries out the reaction adenosine(1518)/adenosine(1519) in 16S rRNA + 4 S-adenosyl-L-methionine = N(6)-dimethyladenosine(1518)/N(6)-dimethyladenosine(1519) in 16S rRNA + 4 S-adenosyl-L-homocysteine + 4 H(+). In terms of biological role, specifically dimethylates two adjacent adenosines (A1518 and A1519) in the loop of a conserved hairpin near the 3'-end of 16S rRNA in the 30S particle. May play a critical role in biogenesis of 30S subunits. The sequence is that of Ribosomal RNA small subunit methyltransferase A from Ehrlichia ruminantium (strain Gardel).